The sequence spans 92 residues: C-C motif chemokine 4 (92 aa).

A signal peptide spans 1 to 23 (MKLCVTVLSLLMLVAAFCSPALS). Intrachain disulfides connect Cys-34–Cys-58 and Cys-35–Cys-74.

The protein belongs to the intercrine beta (chemokine CC) family. As to quaternary structure, homodimer and heterodimer of MIP-1-alpha(4-69) and MIP-1-beta(3-69). N-terminal processed form MIP-1-beta(3-69) is produced by proteolytic cleavage after secretion from peripheral blood lymphocytes.

Its subcellular location is the secreted. Functionally, monokine with inflammatory and chemokinetic properties. Binds to CCR5. One of the major HIV-suppressive factors produced by CD8+ T-cells. Recombinant MIP-1-beta induces a dose-dependent inhibition of different strains of HIV-1, HIV-2, and simian immunodeficiency virus (SIV). The processed form MIP-1-beta(3-69) retains the abilities to induce down-modulation of surface expression of the chemokine receptor CCR5 and to inhibit the CCR5-mediated entry of HIV-1 in T-cells. MIP-1-beta(3-69) is also a ligand for CCR1 and CCR2 isoform B. This chain is C-C motif chemokine 4 (CCL4), found in Homo sapiens (Human).